Here is a 259-residue protein sequence, read N- to C-terminus: Ribosomal RNA small subunit methyltransferase J (259 aa).

S-adenosyl-L-methionine is bound by residues 101 to 102, 117 to 118, 153 to 154, and Asp176; these read RD, ER, and SS.

This sequence belongs to the methyltransferase superfamily. RsmJ family.

The protein resides in the cytoplasm. It carries out the reaction guanosine(1516) in 16S rRNA + S-adenosyl-L-methionine = N(2)-methylguanosine(1516) in 16S rRNA + S-adenosyl-L-homocysteine + H(+). Its function is as follows. Specifically methylates the guanosine in position 1516 of 16S rRNA. The chain is Ribosomal RNA small subunit methyltransferase J from Vibrio vulnificus (strain YJ016).